The sequence spans 511 residues: Maturase K (511 aa).

Belongs to the intron maturase 2 family. MatK subfamily.

The protein resides in the plastid. Its subcellular location is the chloroplast. Functionally, usually encoded in the trnK tRNA gene intron. Probably assists in splicing its own and other chloroplast group II introns. This chain is Maturase K, found in Melica altissima (Siberian melic grass).